We begin with the raw amino-acid sequence, 235 residues long: Aspartate/glutamate leucyltransferase (235 aa).

Belongs to the R-transferase family. Bpt subfamily.

The protein resides in the cytoplasm. The enzyme catalyses N-terminal L-glutamyl-[protein] + L-leucyl-tRNA(Leu) = N-terminal L-leucyl-L-glutamyl-[protein] + tRNA(Leu) + H(+). The catalysed reaction is N-terminal L-aspartyl-[protein] + L-leucyl-tRNA(Leu) = N-terminal L-leucyl-L-aspartyl-[protein] + tRNA(Leu) + H(+). In terms of biological role, functions in the N-end rule pathway of protein degradation where it conjugates Leu from its aminoacyl-tRNA to the N-termini of proteins containing an N-terminal aspartate or glutamate. This chain is Aspartate/glutamate leucyltransferase, found in Pseudomonas syringae pv. tomato (strain ATCC BAA-871 / DC3000).